The primary structure comprises 89 residues: DNA/RNA-binding protein Alba (89 aa).

Lys11 carries the N6-acetyllysine modification.

The protein belongs to the histone-like Alba family. Post-translationally, acetylated. Acetylation at Lys-11 decreases DNA-binding affinity.

Its subcellular location is the cytoplasm. It localises to the chromosome. Binds double-stranded DNA tightly but without sequence specificity. Involved in DNA compaction. In Thermoplasma volcanium (strain ATCC 51530 / DSM 4299 / JCM 9571 / NBRC 15438 / GSS1), this protein is DNA/RNA-binding protein Alba.